Reading from the N-terminus, the 413-residue chain is Mitochondrial carrier protein MTM1 (413 aa).

Solcar repeat units lie at residues 59–193 (IGFT…FRNR), 205–305 (MTFC…IKKR), and 318–406 (GVFG…VKYV). Transmembrane regions (helical) follow at residues 65–85 (VFSAAGAAVLSAVTLNPLDVV), 170–190 (NAGLALAVPMVGIYLPFYDMF), 204–226 (AMTFCVPTVAGSLARSLACTVCY), 284–304 (QLARDVPFSAICWSTLEPIKK), 316–336 (LVGVFGATFSAGFIAGSIAAA), and 378–399 (LFMGMGPRVARAGPSVGIVVSF).

The protein belongs to the mitochondrial carrier (TC 2.A.29) family. In terms of tissue distribution, ubiquitous.

The protein resides in the mitochondrion inner membrane. Involved in the mitochondrial activation of MSD1 by specifically facilitating insertion of the essential manganese cofactor. Has the ability to activate iron regulon in an iron-dependent manner. This is Mitochondrial carrier protein MTM1 (MTM1) from Arabidopsis thaliana (Mouse-ear cress).